A 20-amino-acid chain; its full sequence is ASCTERKHDCTKDRHSCCRG.

This sequence belongs to the spider toxin CSTX family. In terms of tissue distribution, expressed by the venom gland.

Its subcellular location is the secreted. Its function is as follows. Spider venom toxin that exhibits cytolytic activity by forming an alpha-helix across the membrane. Lethal to insect larvae. In Cheiracanthium punctorium (Yellow sac spider), this protein is Toxin CpTx-4a.